We begin with the raw amino-acid sequence, 569 residues long: Sulfite reductase [NADPH] hemoprotein beta-component (569 aa).

4 residues coordinate [4Fe-4S] cluster: C433, C439, C478, and C482. A siroheme-binding site is contributed by C482.

This sequence belongs to the nitrite and sulfite reductase 4Fe-4S domain family. Alpha(8)-beta(8). The alpha component is a flavoprotein, the beta component is a hemoprotein. The cofactor is siroheme. It depends on [4Fe-4S] cluster as a cofactor.

The enzyme catalyses hydrogen sulfide + 3 NADP(+) + 3 H2O = sulfite + 3 NADPH + 4 H(+). It functions in the pathway sulfur metabolism; hydrogen sulfide biosynthesis; hydrogen sulfide from sulfite (NADPH route): step 1/1. Functionally, component of the sulfite reductase complex that catalyzes the 6-electron reduction of sulfite to sulfide. This is one of several activities required for the biosynthesis of L-cysteine from sulfate. The polypeptide is Sulfite reductase [NADPH] hemoprotein beta-component (Blochmanniella floridana).